The following is a 225-amino-acid chain: Urease accessory protein UreG (225 aa).

The interval 1-21 (MHLDHHHESAAAVSADARRPD) is disordered. 33–40 (GPVGSGKT) provides a ligand contact to GTP.

The protein belongs to the SIMIBI class G3E GTPase family. UreG subfamily. As to quaternary structure, homodimer. UreD, UreF and UreG form a complex that acts as a GTP-hydrolysis-dependent molecular chaperone, activating the urease apoprotein by helping to assemble the nickel containing metallocenter of UreC. The UreE protein probably delivers the nickel.

It is found in the cytoplasm. Its function is as follows. Facilitates the functional incorporation of the urease nickel metallocenter. This process requires GTP hydrolysis, probably effectuated by UreG. The protein is Urease accessory protein UreG of Streptomyces coelicolor (strain ATCC BAA-471 / A3(2) / M145).